The sequence spans 191 residues: Pyridoxal 5'-phosphate synthase subunit PdxT (191 aa).

46-48 contributes to the L-glutamine binding site; sequence GES. Cysteine 78 acts as the Nucleophile in catalysis. Residues arginine 105 and 133–134 contribute to the L-glutamine site; that span reads IR. Active-site charge relay system residues include histidine 169 and glutamate 171.

The protein belongs to the glutaminase PdxT/SNO family. In the presence of PdxS, forms a dodecamer of heterodimers. Only shows activity in the heterodimer.

The enzyme catalyses aldehydo-D-ribose 5-phosphate + D-glyceraldehyde 3-phosphate + L-glutamine = pyridoxal 5'-phosphate + L-glutamate + phosphate + 3 H2O + H(+). The catalysed reaction is L-glutamine + H2O = L-glutamate + NH4(+). It participates in cofactor biosynthesis; pyridoxal 5'-phosphate biosynthesis. Its function is as follows. Catalyzes the hydrolysis of glutamine to glutamate and ammonia as part of the biosynthesis of pyridoxal 5'-phosphate. The resulting ammonia molecule is channeled to the active site of PdxS. This is Pyridoxal 5'-phosphate synthase subunit PdxT from Brevibacillus brevis (strain 47 / JCM 6285 / NBRC 100599).